Here is a 434-residue protein sequence, read N- to C-terminus: CCA tRNA nucleotidyltransferase 1, mitochondrial (434 aa).

Residues 1–41 (MLRCLYHWHRPVLNRRWSRLCLPKQYLFTMKLQSPEFQSLF) constitute a mitochondrion transit peptide. ATP is bound by residues Gly-64 and Arg-67. CTP-binding residues include Gly-64 and Arg-67. Positions 77 and 79 each coordinate Mg(2+). Residues Arg-151, Asp-194, Arg-197, Arg-200, and Arg-203 each coordinate ATP. CTP contacts are provided by Arg-151, Asp-194, Arg-197, Arg-200, and Arg-203. A Phosphoserine modification is found at Ser-400. Lys-402 carries the post-translational modification N6-acetyllysine.

This sequence belongs to the tRNA nucleotidyltransferase/poly(A) polymerase family. Monomer, and homodimer; disulfide-linked. The cofactor is Mg(2+).

Its subcellular location is the mitochondrion. The protein localises to the cytoplasm. The protein resides in the nucleus. The enzyme catalyses a tRNA precursor + 2 CTP + ATP = a tRNA with a 3' CCA end + 3 diphosphate. It catalyses the reaction a tRNA with a 3' CCA end + 2 CTP + ATP = a tRNA with a 3' CCACCA end + 3 diphosphate. In terms of biological role, nucleotidyltransferase that catalyzes the addition and repair of the essential 3'-terminal CCA sequence in tRNAs, which is necessary for the attachment of amino acids to the 3' terminus of tRNA molecules, using CTP and ATP as substrates. tRNA 3'-terminal CCA addition is required both for tRNA processing and repair. Promotes tRNA repair and recycling downstream of the ribosome-associated quality control (RQC) pathway by mediating addition of the tRNA 3'-terminal CCA following cleavage by ANKZF1 and repair by ELAC1. Also involved in tRNA surveillance by mediating tandem CCA addition to generate a CCACCA at the 3' terminus of unstable tRNAs and tRNA-like transcripts. While stable tRNAs receive only 3'-terminal CCA, unstable tRNAs beginning with GG are marked with CCACCA and rapidly degraded. The structural flexibility of RNA controls the choice between CCA versus CCACCA addition: following the first CCA addition cycle, nucleotide-binding to the active site triggers a clockwise screw motion, producing torque on the RNA. This ejects stable RNAs, whereas unstable RNAs are refolded while bound to the enzyme and subjected to a second CCA catalytic cycle. Its function is as follows. Adds 2 C residues (CC-) to the 3' terminus of tRNA molecules instead of a complete CCA end as isoform 1 does (in vitro). This Homo sapiens (Human) protein is CCA tRNA nucleotidyltransferase 1, mitochondrial.